The following is a 209-amino-acid chain: MSKSWRELTIAFAGIVLATKQVAQLAKTGYLKTDEFETSVRSLFERNPASTEATYGSGHNLAEAFEELEKLLNNHRDPRNADLLRYVLGVLHLQKKLIKRKEMLYVIGNRLEKAETQAQHFGITHDNVISNIAEIYTDTLSKFPYRIQVTGEATYLQQTRVASQIRVLLLAAIRSATLWRQLGGSRWQLLLYRNQMAKHTHELYLEFKR.

Belongs to the HflD family.

The protein localises to the cytoplasm. Its subcellular location is the cell inner membrane. This is High frequency lysogenization protein HflD homolog from Saccharophagus degradans (strain 2-40 / ATCC 43961 / DSM 17024).